The following is a 184-amino-acid chain: uncharacterized protein (184 aa).

This is an uncharacterized protein from Dictyostelium discoideum (Social amoeba).